The chain runs to 307 residues: tRNA N6-adenosine threonylcarbamoyltransferase (307 aa).

Fe cation contacts are provided by histidine 108 and histidine 112. Substrate is bound by residues 131-135 (IVSGG), aspartate 164, glycine 177, aspartate 181, and asparagine 266. Aspartate 290 lines the Fe cation pocket.

It belongs to the KAE1 / TsaD family. Fe(2+) is required as a cofactor.

The protein localises to the cytoplasm. The catalysed reaction is L-threonylcarbamoyladenylate + adenosine(37) in tRNA = N(6)-L-threonylcarbamoyladenosine(37) in tRNA + AMP + H(+). Required for the formation of a threonylcarbamoyl group on adenosine at position 37 (t(6)A37) in tRNAs that read codons beginning with adenine. Is involved in the transfer of the threonylcarbamoyl moiety of threonylcarbamoyl-AMP (TC-AMP) to the N6 group of A37, together with TsaE and TsaB. TsaD likely plays a direct catalytic role in this reaction. The protein is tRNA N6-adenosine threonylcarbamoyltransferase of Mycoplasmopsis synoviae (strain 53) (Mycoplasma synoviae).